The primary structure comprises 384 residues: Gastrin-releasing peptide receptor (384 aa).

Residues 1 to 38 (MALNDCFLLNLEVDHFMHCNISSHSADLPVNDDWSHPG) lie on the Extracellular side of the membrane. A glycan (N-linked (GlcNAc...) asparagine) is linked at asparagine 20. The helical transmembrane segment at 39–62 (ILYVIPAVYGVIILIGLIGNITLI) threads the bilayer. Residues 63 to 76 (KIFCTVKSMRNVPN) are Cytoplasmic-facing. A helical transmembrane segment spans residues 77 to 96 (LFISSLALGDLLLLITCAPV). The Extracellular segment spans residues 97–114 (DASRYLADRWLFGRIGCK). Cysteine 113 and cysteine 196 are oxidised to a cystine. A helical transmembrane segment spans residues 115–136 (LIPFIQLTSVGVSVFTLTALSA). Topologically, residues 137-152 (DRYKAIVRPMDIQASH) are cytoplasmic. Residues 153–174 (ALMKICLKAAFIWIISMLLAIP) form a helical membrane-spanning segment. The Extracellular segment spans residues 175–208 (EAVFSDLHPFHEESTNQTFISCAPYPHSNELHPK). The chain crosses the membrane as a helical span at residues 209–234 (IHSMASFLVFYVIPLSIISVYYYFIA). Topologically, residues 235–264 (KNLIQSAYNLPVEGNIHVKKQIESRKRLAK) are cytoplasmic. The helical transmembrane segment at 265 to 285 (TVLVFVGLFAFCWLPNHVIYL) threads the bilayer. Topologically, residues 286–298 (YRSYHYSEVDTSM) are extracellular. The helical transmembrane segment at 299 to 325 (LHFVTSICARLLAFTNSCVNPFALYLL) threads the bilayer. Topologically, residues 326-384 (SKSFRKQFNTQLLCCQPGLIIRSHSTGRSTTCMTSLKSTNPSVATFSLINGNICHERYV) are cytoplasmic. Residue cysteine 339 is the site of S-palmitoyl cysteine attachment. Serine 350 is modified (phosphoserine).

Belongs to the G-protein coupled receptor 1 family. In terms of tissue distribution, highly expressed in pancreas. Also expressed in stomach, adrenal cortex and brain. In brain, expressed in cells throughout the cortex.

The protein resides in the cell membrane. Receptor for gastrin-releasing peptide (GRP). Signals via association with G proteins that activate a phosphatidylinositol-calcium second messenger system, resulting in Akt phosphorylation. Contributes to the regulation of food intake. Contributes to the perception of prurient stimuli and transmission of itch signals in the spinal cord that promote scratching behavior, but does not play a role in the perception of pain. Contributes primarily to nonhistaminergic itch sensation. In one study, shown to act in the amygdala as part of an inhibitory network which inhibits memory specifically related to learned fear. In another study, shown to contribute to disinhibition of glutamatergic cells in the auditory cortex via signaling on vasoactive intestinal peptide-expressing cells which leads to enhanced auditory fear memories. Contributes to the induction of sighing through signaling in the pre-Botzinger complex, a cluster of several thousand neurons in the ventrolateral medulla responsible for inspiration during respiratory activity. This chain is Gastrin-releasing peptide receptor (GRPR), found in Homo sapiens (Human).